Reading from the N-terminus, the 506-residue chain is Maturase K (506 aa).

It belongs to the intron maturase 2 family. MatK subfamily.

It is found in the plastid. The protein localises to the chloroplast. In terms of biological role, usually encoded in the trnK tRNA gene intron. Probably assists in splicing its own and other chloroplast group II introns. The sequence is that of Maturase K from Trifolium wormskioldii (Cows clover).